Here is a 185-residue protein sequence, read N- to C-terminus: Translocon-associated protein subunit gamma (185 aa).

At M1 the chain carries N-acetylmethionine. The Lumenal segment spans residues M1–K27. A phosphoserine mark is found at S7 and S11. A helical membrane pass occupies residues S28–W48. Over R49 to D54 the chain is Cytoplasmic. A helical membrane pass occupies residues L55 to A76. Residues Y77–T135 are Lumenal-facing. S105 carries the phosphoserine modification. Residues F136–L157 form a helical membrane-spanning segment. Residues K158–T163 are Cytoplasmic-facing. A helical membrane pass occupies residues V164–S184.

It belongs to the TRAP-gamma family. Heterotetramer of TRAP-alpha, TRAP-beta, TRAP-delta and TRAP-gamma.

It localises to the endoplasmic reticulum membrane. Functionally, TRAP proteins are part of a complex whose function is to bind calcium to the ER membrane and thereby regulate the retention of ER resident proteins. The polypeptide is Translocon-associated protein subunit gamma (SSR3) (Homo sapiens (Human)).